Reading from the N-terminus, the 525-residue chain is GMP synthase [glutamine-hydrolyzing] (525 aa).

The Glutamine amidotransferase type-1 domain occupies 9 to 207 (RILILDFGSQ…VLDVCQCEAL (199 aa)). The Nucleophile role is filled by Cys-86. Residues His-181 and Glu-183 contribute to the active site. In terms of domain architecture, GMPS ATP-PPase spans 208-400 (WTPASIIEDT…LGLPYDMLNR (193 aa)). ATP is bound at residue 235 to 241 (SGGVDSS).

Homodimer.

It carries out the reaction XMP + L-glutamine + ATP + H2O = GMP + L-glutamate + AMP + diphosphate + 2 H(+). The protein operates within purine metabolism; GMP biosynthesis; GMP from XMP (L-Gln route): step 1/1. Functionally, catalyzes the synthesis of GMP from XMP. This is GMP synthase [glutamine-hydrolyzing] from Photorhabdus laumondii subsp. laumondii (strain DSM 15139 / CIP 105565 / TT01) (Photorhabdus luminescens subsp. laumondii).